A 469-amino-acid chain; its full sequence is 3-isopropylmalate dehydratase large subunit (469 aa).

3 residues coordinate [4Fe-4S] cluster: C350, C410, and C413.

Belongs to the aconitase/IPM isomerase family. LeuC type 1 subfamily. Heterodimer of LeuC and LeuD. Requires [4Fe-4S] cluster as cofactor.

It catalyses the reaction (2R,3S)-3-isopropylmalate = (2S)-2-isopropylmalate. It participates in amino-acid biosynthesis; L-leucine biosynthesis; L-leucine from 3-methyl-2-oxobutanoate: step 2/4. In terms of biological role, catalyzes the isomerization between 2-isopropylmalate and 3-isopropylmalate, via the formation of 2-isopropylmaleate. This chain is 3-isopropylmalate dehydratase large subunit, found in Brucella anthropi (strain ATCC 49188 / DSM 6882 / CCUG 24695 / JCM 21032 / LMG 3331 / NBRC 15819 / NCTC 12168 / Alc 37) (Ochrobactrum anthropi).